Consider the following 275-residue polypeptide: 2,3,4,5-tetrahydropyridine-2,6-dicarboxylate N-succinyltransferase (275 aa).

Substrate is bound by residues Arg-104 and Asp-141.

Belongs to the transferase hexapeptide repeat family. As to quaternary structure, homotrimer.

The protein resides in the cytoplasm. The catalysed reaction is (S)-2,3,4,5-tetrahydrodipicolinate + succinyl-CoA + H2O = (S)-2-succinylamino-6-oxoheptanedioate + CoA. It participates in amino-acid biosynthesis; L-lysine biosynthesis via DAP pathway; LL-2,6-diaminopimelate from (S)-tetrahydrodipicolinate (succinylase route): step 1/3. The polypeptide is 2,3,4,5-tetrahydropyridine-2,6-dicarboxylate N-succinyltransferase (Aeromonas salmonicida (strain A449)).